The chain runs to 136 residues: Globin CTP-III (136 aa).

The region spanning 1 to 136 (LSADQISTVQ…TFFGMIFSKM (136 aa)) is the Globin domain. Position 87 (His-87) interacts with heme b.

It belongs to the globin family. Monomer.

The chain is Globin CTP-III from Chironomus thummi piger (Midge).